Consider the following 223-residue polypeptide: MKIFLDTANIDEIRTGVNWGIVDGVTTNPTLISKEAVNGKKYGDIIREILKIVDGPVSVEVVSTKYEGMVEEARKIHGLGDNAVVKIPMTEDGLRAIKTLSSEHINTNCTLVFNPIQALLAAKAGATYVSPFVGRLDDIGEDGMQIIDMIRTIFNNYIIKTQILVASIRNPIHVLRSAVIGADVVTVPFNVLKSLMKHPKTDEGLAKFLEDWKKVSPDGKLIL.

The Schiff-base intermediate with substrate role is filled by Lys-86.

It belongs to the transaldolase family. Type 3B subfamily.

The protein localises to the cytoplasm. It carries out the reaction D-sedoheptulose 7-phosphate + D-glyceraldehyde 3-phosphate = D-erythrose 4-phosphate + beta-D-fructose 6-phosphate. It functions in the pathway carbohydrate degradation; pentose phosphate pathway; D-glyceraldehyde 3-phosphate and beta-D-fructose 6-phosphate from D-ribose 5-phosphate and D-xylulose 5-phosphate (non-oxidative stage): step 2/3. Transaldolase is important for the balance of metabolites in the pentose-phosphate pathway. The chain is Probable transaldolase (tal) from Thermoplasma acidophilum (strain ATCC 25905 / DSM 1728 / JCM 9062 / NBRC 15155 / AMRC-C165).